Consider the following 485-residue polypeptide: Glutamate mutase epsilon subunit (485 aa).

L-glutamate is bound at residue Arg100. Position 123 (Asn123) interacts with adenosylcob(III)alamin. L-glutamate contacts are provided by residues 149 to 150 and Asp171; that span reads KH. Residues Pro180, Phe297, Lys326, and Glu330 each contribute to the adenosylcob(III)alamin site.

Belongs to the methylaspartate mutase GlmE subunit family. As to quaternary structure, heterotetramer composed of 2 epsilon subunits (GlmE) and 2 sigma subunits (GlmS). GlmE exists as a homodimer and GlmS as a monomer. Adenosylcob(III)alamin is required as a cofactor.

It catalyses the reaction (2S,3S)-3-methyl-L-aspartate = L-glutamate. It participates in amino-acid degradation; L-glutamate degradation via mesaconate pathway; acetate and pyruvate from L-glutamate: step 1/4. In terms of biological role, catalyzes the carbon skeleton rearrangement of L-glutamate to L-threo-3-methylaspartate ((2S,3S)-3-methylaspartate). The polypeptide is Glutamate mutase epsilon subunit (Fusobacterium nucleatum subsp. nucleatum (strain ATCC 25586 / DSM 15643 / BCRC 10681 / CIP 101130 / JCM 8532 / KCTC 2640 / LMG 13131 / VPI 4355)).